A 620-amino-acid polypeptide reads, in one-letter code: Chaperone protein HscA homolog (620 aa).

It belongs to the heat shock protein 70 family.

In terms of biological role, chaperone involved in the maturation of iron-sulfur cluster-containing proteins. Has a low intrinsic ATPase activity which is markedly stimulated by HscB. This Shewanella piezotolerans (strain WP3 / JCM 13877) protein is Chaperone protein HscA homolog.